The primary structure comprises 256 residues: Imidazole glycerol phosphate synthase subunit HisF (256 aa).

Active-site residues include Asp12 and Asp131.

This sequence belongs to the HisA/HisF family. As to quaternary structure, heterodimer of HisH and HisF.

The protein localises to the cytoplasm. The catalysed reaction is 5-[(5-phospho-1-deoxy-D-ribulos-1-ylimino)methylamino]-1-(5-phospho-beta-D-ribosyl)imidazole-4-carboxamide + L-glutamine = D-erythro-1-(imidazol-4-yl)glycerol 3-phosphate + 5-amino-1-(5-phospho-beta-D-ribosyl)imidazole-4-carboxamide + L-glutamate + H(+). The protein operates within amino-acid biosynthesis; L-histidine biosynthesis; L-histidine from 5-phospho-alpha-D-ribose 1-diphosphate: step 5/9. In terms of biological role, IGPS catalyzes the conversion of PRFAR and glutamine to IGP, AICAR and glutamate. The HisF subunit catalyzes the cyclization activity that produces IGP and AICAR from PRFAR using the ammonia provided by the HisH subunit. This chain is Imidazole glycerol phosphate synthase subunit HisF, found in Bifidobacterium adolescentis (strain ATCC 15703 / DSM 20083 / NCTC 11814 / E194a).